Consider the following 66-residue polypeptide: Large ribosomal subunit protein bL35 (66 aa).

The protein belongs to the bacterial ribosomal protein bL35 family.

This Brucella anthropi (strain ATCC 49188 / DSM 6882 / CCUG 24695 / JCM 21032 / LMG 3331 / NBRC 15819 / NCTC 12168 / Alc 37) (Ochrobactrum anthropi) protein is Large ribosomal subunit protein bL35.